A 141-amino-acid polypeptide reads, in one-letter code: uncharacterized protein (141 aa).

A coiled-coil region spans residues 24-52 (KVQTALQKEAKTIKREQKKIKDEIDTFKT).

This is an uncharacterized protein from Invertebrate iridescent virus 6 (IIV-6).